The sequence spans 278 residues: Protein Rv2133c (278 aa).

This Mycobacterium tuberculosis (strain ATCC 25618 / H37Rv) protein is Protein Rv2133c.